The primary structure comprises 400 residues: Protein phyllopod (400 aa).

An interaction with sina region spans residues 109–127 (QERTKLRPVAMVRPTVRVQ). Residues 125–145 (RVQPQSQPQLQPQVPINPTPA) form a disordered region. Over residues 127–138 (QPQSQPQLQPQV) the composition is skewed to low complexity. An interaction with ttk region spans residues 241 to 320 (YQRFPQPSVD…TAISEVLPTA (80 aa)). A coiled-coil region spans residues 319 to 362 (TARYQVTHEENKENQQAQEMELELEEEEEVDGRAELEVVQEAEA). A disordered region spans residues 346–382 (EEVDGRAELEVVQEAEAPLEPQSHHKQGNSHQNSHQA).

In terms of assembly, component of some E3 complex at least composed of sina, ebi and phyl, required for the degradation of ttk. In embryos, it is ubiquitously present before cellularization. During stages 9-11, it is expressed in neuroblasts and the SOP cells. From stage 12 onward, it decreases, but remains in a subset of PNS cells at stages 12-14. Weakly expressed in wing imaginal disks, in the SOP cells of wing margin bristles, notal macrochaetes, and other sensory organs. In leg disks, it is expressed in the precursors of the femoral chordotonal organs, as well as in external sensory SOP cells. Strongly expressed in the eye-antenna disk, it is specifically expressed in R1, R6 and R7 cells, and not in R3, R3, R4, R5 and R8 cells.

It localises to the nucleus. In terms of biological role, essential adapter component of E3 ubiquitin ligase complexes; involved in R7 photoreceptor cell differentiation, embryonic nervous system, external sensory organ development and specification of particular muscles. E3 ubiquitin ligase complexes mediate ubiquitination and subsequent proteasomal degradation of target proteins. Required for specification of R7 photoreceptor cell fate in the eye by participating in the ubiquitination and subsequent proteasomal degradation of Tramtrack (ttk), a general inhibitor of photoreceptor differentiation. Acts downstream of Notch signaling to specify the fate of the SOP (sensory organ precursor) cells and their progeny, probably via the sina-mediated proteasomal degradation of ttk. Its restricted pattern of expression, upon Notch and Ras signaling pathways, suggests that it acts as a key determinant in E3 complexes to trigger protein proteolysis in appropriate cells. The polypeptide is Protein phyllopod (phyl) (Drosophila melanogaster (Fruit fly)).